A 253-amino-acid polypeptide reads, in one-letter code: UPF0280 protein Mbar_A3697 (253 aa).

This sequence belongs to the UPF0280 family.

In Methanosarcina barkeri (strain Fusaro / DSM 804), this protein is UPF0280 protein Mbar_A3697.